Here is a 548-residue protein sequence, read N- to C-terminus: Chaperonin GroEL (548 aa).

Residues 30–33 (TLGP), Lys-51, 87–91 (DGTTT), Gly-415, 479–481 (NAA), and Asp-495 contribute to the ATP site. Residues 524–548 (LPKEDKSSDSSSSPAGGMGGMGGMM) are disordered. Residues 539 to 548 (GGMGGMGGMM) are compositionally biased toward gly residues.

This sequence belongs to the chaperonin (HSP60) family. Forms a cylinder of 14 subunits composed of two heptameric rings stacked back-to-back. Interacts with the co-chaperonin GroES.

It is found in the cytoplasm. It carries out the reaction ATP + H2O + a folded polypeptide = ADP + phosphate + an unfolded polypeptide.. In terms of biological role, together with its co-chaperonin GroES, plays an essential role in assisting protein folding. The GroEL-GroES system forms a nano-cage that allows encapsulation of the non-native substrate proteins and provides a physical environment optimized to promote and accelerate protein folding. The protein is Chaperonin GroEL of Buchnera aphidicola subsp. Acyrthosiphon pisum (strain Tuc7).